Consider the following 141-residue polypeptide: Small ribosomal subunit protein bS18c (141 aa).

2 disordered regions span residues 14–55 (EFIA…IKPG) and 120–141 (IKRR…RPKK). A compositionally biased stretch (pro residues) spans 24–34 (PKAPLQPPLPP). Over residues 35-51 (SKRKGKPPKSPRRRSSR) the composition is skewed to basic residues.

Belongs to the bacterial ribosomal protein bS18 family. In terms of assembly, part of the 30S ribosomal subunit.

Its subcellular location is the plastid. It localises to the chloroplast. The polypeptide is Small ribosomal subunit protein bS18c (Pelargonium hortorum (Common geranium)).